Consider the following 247-residue polypeptide: Protein LIFEGUARD 4 (247 aa).

A run of 7 helical transmembrane segments spans residues 42-62 (VYSI…TVVF), 75-95 (AGLA…CPLY), 105-125 (YLLL…TCAF), 130-150 (VILE…VYTF), 165-185 (FLFG…FFPL), 188-208 (ISVM…IVYD), and 222-242 (IWAA…LLTI).

Belongs to the BI1 family.

The protein resides in the membrane. The polypeptide is Protein LIFEGUARD 4 (Arabidopsis thaliana (Mouse-ear cress)).